A 189-amino-acid polypeptide reads, in one-letter code: TATA-box-binding protein 1 (189 aa).

Repeat copies occupy residues 10-86 and 101-179.

The protein belongs to the TBP family.

Its function is as follows. General factor that plays a role in the activation of archaeal genes transcribed by RNA polymerase. Binds specifically to the TATA box promoter element which lies close to the position of transcription initiation. The chain is TATA-box-binding protein 1 (tbp1) from Haloferax volcanii (strain ATCC 29605 / DSM 3757 / JCM 8879 / NBRC 14742 / NCIMB 2012 / VKM B-1768 / DS2) (Halobacterium volcanii).